The chain runs to 467 residues: ATP-dependent protease ATPase subunit HslU (467 aa).

Residues V22 and 64 to 69 (GVGKTE) contribute to the ATP site. The disordered stretch occupies residues 146–185 (KASNNSNPLESLLGGAIPNFGNNDDEEEETPTEEIKTKRS). The span at 168–177 (NDDEEEETPT) shows a compositional bias: acidic residues. Positions 280, 345, and 417 each coordinate ATP.

The protein belongs to the ClpX chaperone family. HslU subfamily. As to quaternary structure, a double ring-shaped homohexamer of HslV is capped on each side by a ring-shaped HslU homohexamer. The assembly of the HslU/HslV complex is dependent on binding of ATP.

It localises to the cytoplasm. In terms of biological role, ATPase subunit of a proteasome-like degradation complex; this subunit has chaperone activity. The binding of ATP and its subsequent hydrolysis by HslU are essential for unfolding of protein substrates subsequently hydrolyzed by HslV. HslU recognizes the N-terminal part of its protein substrates and unfolds these before they are guided to HslV for hydrolysis. This chain is ATP-dependent protease ATPase subunit HslU, found in Staphylococcus haemolyticus (strain JCSC1435).